A 124-amino-acid polypeptide reads, in one-letter code: MNESYEMIYILRPSLSEEQVNQEVNKYRDFLNEYNVKDLQVKIWGKRRLAYPIKRFIDGIYVQMNYQGEGNQVAPLERAMRLSEEVIRYMTLKVETAVSETPASVPEVLVPEPVEEPTPVAAEA.

Belongs to the bacterial ribosomal protein bS6 family.

Its function is as follows. Binds together with bS18 to 16S ribosomal RNA. The polypeptide is Small ribosomal subunit protein bS6 (Rippkaea orientalis (strain PCC 8801 / RF-1) (Cyanothece sp. (strain PCC 8801))).